The primary structure comprises 55 residues: MCCGPCGSCCGYYCCGPCCGPCGPRCGPCGSCCGPCGPCGPCCGPFGSCCGGCWC.

Belongs to the MST(3)CGP family. In terms of tissue distribution, testis.

The sequence is that of Male-specific sperm protein Mst84Dc (Mst84Dc) from Drosophila melanogaster (Fruit fly).